The primary structure comprises 419 residues: UDP-N-acetylglucosamine 1-carboxyvinyltransferase 2 (419 aa).

Residue 22 to 23 coordinates phosphoenolpyruvate; sequence KN. A UDP-N-acetyl-alpha-D-glucosamine-binding site is contributed by R92. Residue C116 is the Proton donor of the active site. C116 is subject to 2-(S-cysteinyl)pyruvic acid O-phosphothioketal. UDP-N-acetyl-alpha-D-glucosamine contacts are provided by residues 121–125, D306, and V328; that span reads RPIDL.

The protein belongs to the EPSP synthase family. MurA subfamily.

The protein resides in the cytoplasm. It carries out the reaction phosphoenolpyruvate + UDP-N-acetyl-alpha-D-glucosamine = UDP-N-acetyl-3-O-(1-carboxyvinyl)-alpha-D-glucosamine + phosphate. It participates in cell wall biogenesis; peptidoglycan biosynthesis. Cell wall formation. Adds enolpyruvyl to UDP-N-acetylglucosamine. This is UDP-N-acetylglucosamine 1-carboxyvinyltransferase 2 from Carboxydothermus hydrogenoformans (strain ATCC BAA-161 / DSM 6008 / Z-2901).